We begin with the raw amino-acid sequence, 201 residues long: MNETNDNDIDQLIYLFSKLPGLGSRSARRIALYLLQDKDVRLKSLINNLVEIDKKIVKCKICGNIDTENICRICSSEYRDKSIIAIVETVAELWAMERSGNFKGLYHVLGHNLSAASRQNPSILRLPELLKRCFAENIKEVIIATNSTLEGQTTAYFITEYLKEHPAKISRLASGIPIGGELDYLDEGTVSAAINLRQPFE.

The segment at 59–74 (CKICGNIDTENICRIC) adopts a C4-type zinc-finger fold. The Toprim domain occupies 82–177 (SIIAIVETVA…KISRLASGIP (96 aa)).

The protein belongs to the RecR family.

Functionally, may play a role in DNA repair. It seems to be involved in an RecBC-independent recombinational process of DNA repair. It may act with RecF and RecO. The protein is Recombination protein RecR of Rickettsia massiliae (strain Mtu5).